Consider the following 204-residue polypeptide: General stress protein Ctc (204 aa).

The segment at 177 to 204 is disordered; that stretch reads ILPPQQQEAAEVDEEESADAQPEGENEQ. Acidic residues predominate over residues 186-204; the sequence is AEVDEEESADAQPEGENEQ.

It belongs to the bacterial ribosomal protein bL25 family. CTC subfamily. As to quaternary structure, part of the ribosome (presumably the 50S subunit) under heat-stress but not control growth conditions. Binds 5S rRNA.

Its function is as follows. Not required for exponential growth; probably functions in vegetatively growing cells, maybe required for accurate translation under stress conditions. This is General stress protein Ctc from Bacillus subtilis (strain 168).